The primary structure comprises 537 residues: Small conductance calcium-activated potassium channel protein 1 (537 aa).

Over residues 1–10 (MSSHSHNGSV) the composition is skewed to polar residues. Positions 1-90 (MSSHSHNGSV…GKPPTVSHRL (90 aa)) are disordered. Over residues 65–76 (QEEEEEEEEEED) the composition is skewed to acidic residues. Residues 108–128 (LIFGMFGIVVMVTETELSWGV) form a helical membrane-spanning segment. Residues 137–157 (FALKCLISLSTVILLGLVILY) form a helical membrane-spanning segment. A helical transmembrane segment spans residues 176–196 (IAMTWERVSLISLELVVCAIH). The chain crosses the membrane as a helical span at residues 225 to 245 (VLLSIPMFLRLYLLARVMLLH). Residues 274 to 294 (LMTICPGTVLLVFSVSSWIVA) traverse the membrane as a helical segment. Residues 314-334 (FLGAMWLISITFLSIGYGDMV) constitute an intramembrane region (pore-forming). Positions 343-363 (VCLLTGIMGAGCTALVVAVVA) are segment S6. The calmodulin-binding stretch occupies residues 381–460 (DTQLTKRVKN…LAELAKAQSI (80 aa)).

It belongs to the potassium channel KCNN family. KCa2.1/KCNN1 subfamily. As to quaternary structure, homodimer. Heteromultimer with KCNN2 and KCNN3. The complex is composed of 4 channel subunits each of which binds to a calmodulin subunit which regulates the channel activity through calcium-binding. Interacts with calmodulin. Highest expression in brain and liver with lower levels in heart, testis, kidney and colon. In colon, detected in smooth muscle cells. Expressed in atrial and ventricular myocytes with higher levels in atrial myocytes.

The protein resides in the membrane. It localises to the cytoplasm. It is found in the myofibril. Its subcellular location is the sarcomere. The protein localises to the z line. The enzyme catalyses K(+)(in) = K(+)(out). Its activity is regulated as follows. Inhibited by bee venom neurotoxin apamin. Inhibited by d-tubocurarine and tetraethylammonium (TEA). Its function is as follows. Small conductance calcium-activated potassium channel that mediates the voltage-independent transmembrane transfer of potassium across the cell membrane through a constitutive interaction with calmodulin which binds the intracellular calcium allowing its opening. The current is characterized by a voltage-independent activation, an intracellular calcium concentration increase-dependent activation and a single-channel conductance of about 3 picosiemens. Also presents an inwardly rectifying current, thus reducing its already small outward conductance of potassium ions, which is particularly the case when the membrane potential displays positive values, above + 20 mV. Activation is followed by membrane hyperpolarization. Thought to regulate neuronal excitability by contributing to the slow component of synaptic afterhyperpolarization. The polypeptide is Small conductance calcium-activated potassium channel protein 1 (Mus musculus (Mouse)).